A 399-amino-acid chain; its full sequence is Elongation factor Tu 1 (399 aa).

Positions 10-209 (KPHVNIGTIG…QVDTYIPEPE (200 aa)) constitute a tr-type G domain. The interval 19-26 (GHVDHGKT) is G1. 19 to 26 (GHVDHGKT) serves as a coordination point for GTP. A Mg(2+)-binding site is contributed by threonine 26. The segment at 60–64 (GITIA) is G2. Residues 81–84 (DCPG) form a G3 region. Residues 81–85 (DCPGH) and 136–139 (NKAD) each bind GTP. The tract at residues 136–139 (NKAD) is G4. The G5 stretch occupies residues 174-176 (SAL).

This sequence belongs to the TRAFAC class translation factor GTPase superfamily. Classic translation factor GTPase family. EF-Tu/EF-1A subfamily. As to quaternary structure, monomer.

It is found in the cytoplasm. It carries out the reaction GTP + H2O = GDP + phosphate + H(+). Its function is as follows. GTP hydrolase that promotes the GTP-dependent binding of aminoacyl-tRNA to the A-site of ribosomes during protein biosynthesis. The protein is Elongation factor Tu 1 of Syntrophotalea carbinolica (strain DSM 2380 / NBRC 103641 / GraBd1) (Pelobacter carbinolicus).